We begin with the raw amino-acid sequence, 809 residues long: Lethal factor (809 aa).

Residues 1 to 33 (MNIKKEFIKVISMSCLVTAITLSGPVFIPLVQG) form the signal peptide. A disordered region spans residues 39–66 (DVGMHVKEKEKNKDENKRKDEERNKTQE). A compositionally biased stretch (basic and acidic residues) spans 40-66 (VGMHVKEKEKNKDENKRKDEERNKTQE). Residues 60–295 (ERNKTQEEHL…NLSLEELKDQ (236 aa)) are i; PA-binding region. One can recognise an ATLF-like 1 domain in the interval 70–282 (KEIMKHIVKI…AFNYMDKFNE (213 aa)). The interval 296 to 330 (RMLARYEKWEKIKQHYQHWSDSLSEEGRGLLKKLQ) is IIA. 5 consecutive repeat copies span residues 315 to 333 (SDSL…QIPI), 342 to 357 (HSLS…RIQI), 360 to 378 (SDFL…QIDI), 380 to 397 (DSLS…QVDS), and 399 to 416 (NPLS…KLDI). Residues 315–416 (SDSLSEEGRG…EFLKKLKLDI (102 aa)) form a 5 X approximate repeats region. Residues 336–416 (KKDDIIHSLS…EFLKKLKLDI (81 aa)) form an III region. Residues 420–583 (DINQRLQDTG…EYIRIDAKVV (164 aa)) are IIB. Residues 585-809 (KSKIDTKIQE…NDQIKFIINS (225 aa)) are IV. An ATLF-like 2 domain is found at 609-804 (LPKYTKLITF…TFQFINDQIK (196 aa)). A Zn(2+)-binding site is contributed by H719. E720 (proton acceptor) is an active-site residue. Zn(2+)-binding residues include H723, Y761, and E768.

It belongs to the peptidase M34 family. In terms of assembly, interacts (via ATLF domain 1) with the cleaved form of protective antigen (PA-63) anthrax toxin; interaction is required for LF translocation into the host cytoplasm. Interacts with PA-63 homooligomers (either homoheptamers or homooctamers): three molecules of LF bind the PA-63 homoheptamer to form the PA(7)LF(3) complex, in which the relative position of the N-terminal alpha-helices in the three LFs determines which factor is translocated first. Requires Zn(2+) as cofactor.

Its subcellular location is the secreted. The protein localises to the host cytoplasm. It localises to the host cytosol. It carries out the reaction Preferred amino acids around the cleavage site can be denoted BBBBxHx-|-H, in which B denotes Arg or Lys, H denotes a hydrophobic amino acid, and x is any amino acid. The only known protein substrates are mitogen-activated protein (MAP) kinase kinases.. Its activity is regulated as follows. Inhibited by NSC-12155 (1,3-Bis(2-methyl-4-aminoquinoline-6-yl)ure). Inhibited by phenoxyacetic acid bearing alpha-benzyl substituents on the C2-side chain. Inhibited by sulfonamide hydroxamate with benzylic additions at the sulfonamide nitrogen. Also inhibited by sulfonamide hydroxamates with alkylation at the sulfonamide nitrogen. Inhibited by hydroxamic acid inhibitors. Its function is as follows. Lethal factor (LF), which constitutes one of the three proteins composing the anthrax toxin, is able to trigger rapid cell death in macrophages. Acts as a protease that cleaves the N-terminal of most dual specificity mitogen-activated protein kinase kinases (MAPKKs or MAP2Ks) (except for MAP2K5): cleavage invariably occurs within the N-terminal proline-rich region preceding the kinase domain, thus disrupting a sequence involved in directing specific protein-protein interactions necessary for the assembly of signaling complexes. Also cleaves mouse Nlrp1b: host Nlrp1b cleavage promotes ubiquitination and degradation of the N-terminal part of Nlrp1b by the proteasome, thereby releasing the cleaved C-terminal part of Nlrp1b, which polymerizes and forms the Nlrp1b inflammasome followed by host cell pyroptosis. Able to cleave mouse Nlrp1b alleles 1 and 5, while it is not able to cleave Nlrp1b alleles 2, 3 and 4. In contrast, does not cleave NLRP1 human ortholog. LF is not toxic by itself and only acts as a lethal factor when associated with protective antigen (PA) to form the lethal toxin (LeTx): PA is required for LF translocation into the host cytosol. This chain is Lethal factor, found in Bacillus anthracis.